The primary structure comprises 313 residues: tRNA dimethylallyltransferase (313 aa).

G11–S18 provides a ligand contact to ATP. T13–S18 is a binding site for substrate. Interaction with substrate tRNA regions lie at residues D36–T39, Q160–R164, and R244–R249.

This sequence belongs to the IPP transferase family. As to quaternary structure, monomer. It depends on Mg(2+) as a cofactor.

The catalysed reaction is adenosine(37) in tRNA + dimethylallyl diphosphate = N(6)-dimethylallyladenosine(37) in tRNA + diphosphate. Its function is as follows. Catalyzes the transfer of a dimethylallyl group onto the adenine at position 37 in tRNAs that read codons beginning with uridine, leading to the formation of N6-(dimethylallyl)adenosine (i(6)A). The protein is tRNA dimethylallyltransferase of Bordetella pertussis (strain Tohama I / ATCC BAA-589 / NCTC 13251).